Here is a 102-residue protein sequence, read N- to C-terminus: Small ribosomal subunit protein bS20 (102 aa).

Belongs to the bacterial ribosomal protein bS20 family.

Functionally, binds directly to 16S ribosomal RNA. The protein is Small ribosomal subunit protein bS20 of Gloeobacter violaceus (strain ATCC 29082 / PCC 7421).